Consider the following 141-residue polypeptide: uncharacterized protein (141 aa).

The next 2 membrane-spanning stretches (helical) occupy residues 41-61 and 95-115; these read LIMLLVAICSSLSGNTVNYLF and IIFLISFPFWGCFVSLFSGFF.

Its subcellular location is the cell membrane. This is an uncharacterized protein from Rickettsia prowazekii (strain Madrid E).